The sequence spans 154 residues: Mitochondrial fission 1 protein (154 aa).

The Cytoplasmic segment spans residues 1–124 (MEDLLNEVVP…KEIDKEVAKG (124 aa)). Residues 125 to 145 (MVVAGGAALVLGGILGLGIAM) traverse the membrane as a helical segment. At 146 to 154 (ARNKQKREK) the chain is on the mitochondrial intermembrane side.

The protein belongs to the FIS1 family.

It is found in the mitochondrion outer membrane. Involved in the fragmentation of the mitochondrial network and its perinuclear clustering. Functions downstream of Pink1 and upstream of Drp1 to regulate mitochondrial fission. This is Mitochondrial fission 1 protein from Drosophila melanogaster (Fruit fly).